The following is a 239-amino-acid chain: tRNA (guanine-N(1)-)-methyltransferase (239 aa).

Residues glycine 108 and 127 to 132 (LGDYVL) contribute to the S-adenosyl-L-methionine site.

The protein belongs to the RNA methyltransferase TrmD family. In terms of assembly, homodimer.

Its subcellular location is the cytoplasm. The enzyme catalyses guanosine(37) in tRNA + S-adenosyl-L-methionine = N(1)-methylguanosine(37) in tRNA + S-adenosyl-L-homocysteine + H(+). Its function is as follows. Specifically methylates guanosine-37 in various tRNAs. The protein is tRNA (guanine-N(1)-)-methyltransferase of Streptococcus pneumoniae serotype 2 (strain D39 / NCTC 7466).